The primary structure comprises 169 residues: Ribosome maturation factor RimM (169 aa).

The PRC barrel domain occupies 97-169; the sequence is EDEVYFKDLI…KIVVDWEYDY (73 aa).

Belongs to the RimM family. Binds ribosomal protein uS19.

Its subcellular location is the cytoplasm. An accessory protein needed during the final step in the assembly of 30S ribosomal subunit, possibly for assembly of the head region. Essential for efficient processing of 16S rRNA. May be needed both before and after RbfA during the maturation of 16S rRNA. It has affinity for free ribosomal 30S subunits but not for 70S ribosomes. This chain is Ribosome maturation factor RimM, found in Francisella tularensis subsp. tularensis (strain FSC 198).